Consider the following 102-residue polypeptide: NADH-quinone oxidoreductase subunit K (102 aa).

3 helical membrane-spanning segments follow: residues 4 to 24, 31 to 51, and 65 to 85; these read IGLN…LVGV, LMLF…FAAI, and FFVI…LIVW.

It belongs to the complex I subunit 4L family. NDH-1 is composed of 14 different subunits. Subunits NuoA, H, J, K, L, M, N constitute the membrane sector of the complex.

The protein localises to the cell inner membrane. It catalyses the reaction a quinone + NADH + 5 H(+)(in) = a quinol + NAD(+) + 4 H(+)(out). NDH-1 shuttles electrons from NADH, via FMN and iron-sulfur (Fe-S) centers, to quinones in the respiratory chain. The immediate electron acceptor for the enzyme in this species is believed to be ubiquinone. Couples the redox reaction to proton translocation (for every two electrons transferred, four hydrogen ions are translocated across the cytoplasmic membrane), and thus conserves the redox energy in a proton gradient. The protein is NADH-quinone oxidoreductase subunit K of Sulfurimonas denitrificans (strain ATCC 33889 / DSM 1251) (Thiomicrospira denitrificans (strain ATCC 33889 / DSM 1251)).